We begin with the raw amino-acid sequence, 488 residues long: N-succinylglutamate 5-semialdehyde dehydrogenase (488 aa).

221–226 (GSSRTG) provides a ligand contact to NAD(+). Active-site residues include glutamate 244 and cysteine 278.

This sequence belongs to the aldehyde dehydrogenase family. AstD subfamily.

The enzyme catalyses N-succinyl-L-glutamate 5-semialdehyde + NAD(+) + H2O = N-succinyl-L-glutamate + NADH + 2 H(+). The protein operates within amino-acid degradation; L-arginine degradation via AST pathway; L-glutamate and succinate from L-arginine: step 4/5. Catalyzes the NAD-dependent reduction of succinylglutamate semialdehyde into succinylglutamate. In Pseudomonas fluorescens (strain SBW25), this protein is N-succinylglutamate 5-semialdehyde dehydrogenase.